A 502-amino-acid chain; its full sequence is Glycerol kinase (502 aa).

Residue Thr-14 participates in ADP binding. ATP contacts are provided by Thr-14, Thr-15, and Ser-16. Thr-14 contributes to the sn-glycerol 3-phosphate binding site. Arg-18 lines the ADP pocket. Residues Arg-84, Glu-85, and Tyr-136 each coordinate sn-glycerol 3-phosphate. The glycerol site is built by Arg-84, Glu-85, and Tyr-136. Position 232 is a phosphohistidine; by HPr (His-232). Asp-246 provides a ligand contact to sn-glycerol 3-phosphate. Residues Asp-246 and Gln-247 each contribute to the glycerol site. Residues Thr-268 and Gly-311 each contribute to the ADP site. ATP is bound by residues Thr-268, Gly-311, Gln-315, and Gly-412. Gly-412 and Asn-416 together coordinate ADP.

It belongs to the FGGY kinase family. As to quaternary structure, homotetramer and homodimer (in equilibrium). In terms of processing, the phosphoenolpyruvate-dependent sugar phosphotransferase system (PTS), including enzyme I, and histidine-containing protein (HPr) are required for the phosphorylation, which leads to the activation of the enzyme.

The catalysed reaction is glycerol + ATP = sn-glycerol 3-phosphate + ADP + H(+). The protein operates within polyol metabolism; glycerol degradation via glycerol kinase pathway; sn-glycerol 3-phosphate from glycerol: step 1/1. Activated by phosphorylation and inhibited by fructose 1,6-bisphosphate (FBP). Functionally, key enzyme in the regulation of glycerol uptake and metabolism. Catalyzes the phosphorylation of glycerol to yield sn-glycerol 3-phosphate. This chain is Glycerol kinase, found in Streptococcus pneumoniae (strain ATCC 700669 / Spain 23F-1).